The following is a 437-amino-acid chain: Ribosomal protein uS12 methylthiotransferase RimO (437 aa).

The MTTase N-terminal domain occupies 5-116 (PTISVSHLGC…IAEVIQRVET (112 aa)). Residues cysteine 14, cysteine 50, cysteine 79, cysteine 154, cysteine 158, and cysteine 161 each contribute to the [4Fe-4S] cluster site. A Radical SAM core domain is found at 140 to 369 (TTNEAVAYLR…MEIQQPIAAK (230 aa)). A TRAM domain is found at 372 to 437 (QKCVGQTVEV…DVYDLYGKVI (66 aa)).

Belongs to the methylthiotransferase family. RimO subfamily. The cofactor is [4Fe-4S] cluster.

It is found in the cytoplasm. The catalysed reaction is L-aspartate(89)-[ribosomal protein uS12]-hydrogen + (sulfur carrier)-SH + AH2 + 2 S-adenosyl-L-methionine = 3-methylsulfanyl-L-aspartate(89)-[ribosomal protein uS12]-hydrogen + (sulfur carrier)-H + 5'-deoxyadenosine + L-methionine + A + S-adenosyl-L-homocysteine + 2 H(+). Its function is as follows. Catalyzes the methylthiolation of an aspartic acid residue of ribosomal protein uS12. This Crocosphaera subtropica (strain ATCC 51142 / BH68) (Cyanothece sp. (strain ATCC 51142)) protein is Ribosomal protein uS12 methylthiotransferase RimO.